A 442-amino-acid polypeptide reads, in one-letter code: Protein bag of marbles (442 aa).

Residues 201–250 (FDMPVKSTMPKSLNVRYQLQVLCTKVERFLVQQRRTLEANRHFDFEKYDE) are required for interaction with ubiquitin. The interval 408–442 (VSMEQPSASEEEFEETEEVPSSPPRHTGRVPRFRS) is disordered. Acidic residues predominate over residues 416–425 (SEEEFEETEE). Positions 433–442 (HTGRVPRFRS) are enriched in basic residues.

Interacts (via central region) with ubiquitin. Interacts (via C-terminus) with otu (via OTU domain); the interaction enhances otu aggregation into amyloid-like structures and enhances its deubiquitinase activity. Together with otu interacts with CycA/cyclin-A (via C-terminus); the interaction stabilizes CycA by promoting and enhancing otu dependent deubiquitination of CycA. Together with otu interacts with Traf6. Part of a complex composed of at least tut, bam and bgcn; complex formation does not require RNA. Interacts (via C-terminus) with bgcn; the interaction is direct and is not disrupted by eIF4A. Interacts with eIF4A (via multiple contacts); the interaction is direct and is not disrupted by bgcn. Interacts (via N-terminus) with tut; the interaction is direct and mediates the interaction between tut and bgcn. As part of the bam-bgcn-tut complex associates with twin; may recruit the CCR4-NOT1 deadenylation complex to mRNA 3'-UTRs to mediate post-transcriptional regulation of expression. Part of a complex composed of at least mei-P26, bam, bgcn and Sxl; this complex is involved in translational repression of nanos mRNA. Ubiquitinated (C-terminal region). In terms of tissue distribution, in cystoblasts and/or very early cystocytes in testis (at protein level); expression levels are regulated by mei-P26. In cystoblasts and/or very early cystocytes in ovary. Expressed in the gut; expression levels increase with age.

It is found in the cytoplasm. Regulatory component of a deubiquitinase complex consisting of bam and otu. The complex deubiquitinates K63-linked polyubiquitinated proteins, antagonizing the ubiquitination activity of Traf6 and regulating the IMD immune signaling pathway. Otu-bam deubiquitinase activity is regulated by Traf6 dependent immune signaling regulation of bam expression levels; this forms a feedback loop that regulates the IMD immune signaling pathway and balances gut immune activity during aging. The complex deubiquitinates and stabilizes CycA/cyclin-A to regulate CycA-dependent differentiation. Required to initiate both male and female gametogenesis. Part of a complex with bgcn involved in 3'-UTR-dependent translational repression of a subset of mRNAs, including those for mei-P26, nanos and shg/E-cadherin. Repression of mei-P26 is targeted by let-7 miRNA. Involved in a regulatory cascade with mei-P26 to control the progression of cystocytes through transit amplification and the switch to spermatocyte differentiation; mei-P26 facilitates bam accumulation, which in turn represses translation of mei-P26. Forms a complex with tut and bgcn involved in 3'-UTR-dependent post-transcriptional repression of several 3'-RNA processing factors, which promotes germline stem cell lineage differentiation and mitosis-to-meiosis transition. The chain is Protein bag of marbles from Drosophila melanogaster (Fruit fly).